The primary structure comprises 111 residues: Cytochrome c oxidase subunit 6A1, mitochondrial (111 aa).

The transit peptide at 1 to 26 (MASAVLSASRVSGLLGRALPRVGRPM) directs the protein to the mitochondrion. The Mitochondrial matrix portion of the chain corresponds to 27-36 (SSGAHGEEGS). Residues 37-61 (ARIWKALTYFVALPGVGVSMLNVFL) traverse the membrane as a helical segment. Residues 62–111 (KSRHEEHERPEFVAYPHLRIRTKPFPWGDGNHTLFHNPHMNPLPTGYEDE) are Mitochondrial intermembrane-facing.

This sequence belongs to the cytochrome c oxidase subunit 6A family. Component of the cytochrome c oxidase (complex IV, CIV), a multisubunit enzyme composed of 14 subunits. The complex is composed of a catalytic core of 3 subunits MT-CO1, MT-CO2 and MT-CO3, encoded in the mitochondrial DNA, and 11 supernumerary subunits COX4I, COX5A, COX5B, COX6A, COX6B, COX6C, COX7A, COX7B, COX7C, COX8 and NDUFA4, which are encoded in the nuclear genome. The complex exists as a monomer or a dimer and forms supercomplexes (SCs) in the inner mitochondrial membrane with NADH-ubiquinone oxidoreductase (complex I, CI) and ubiquinol-cytochrome c oxidoreductase (cytochrome b-c1 complex, complex III, CIII), resulting in different assemblies (supercomplex SCI(1)III(2)IV(1) and megacomplex MCI(2)III(2)IV(2)).

The protein localises to the mitochondrion inner membrane. It participates in energy metabolism; oxidative phosphorylation. Its function is as follows. Component of the cytochrome c oxidase, the last enzyme in the mitochondrial electron transport chain which drives oxidative phosphorylation. The respiratory chain contains 3 multisubunit complexes succinate dehydrogenase (complex II, CII), ubiquinol-cytochrome c oxidoreductase (cytochrome b-c1 complex, complex III, CIII) and cytochrome c oxidase (complex IV, CIV), that cooperate to transfer electrons derived from NADH and succinate to molecular oxygen, creating an electrochemical gradient over the inner membrane that drives transmembrane transport and the ATP synthase. Cytochrome c oxidase is the component of the respiratory chain that catalyzes the reduction of oxygen to water. Electrons originating from reduced cytochrome c in the intermembrane space (IMS) are transferred via the dinuclear copper A center (CU(A)) of subunit 2 and heme A of subunit 1 to the active site in subunit 1, a binuclear center (BNC) formed by heme A3 and copper B (CU(B)). The BNC reduces molecular oxygen to 2 water molecules unsing 4 electrons from cytochrome c in the IMS and 4 protons from the mitochondrial matrix. The polypeptide is Cytochrome c oxidase subunit 6A1, mitochondrial (Cox6a1) (Rattus norvegicus (Rat)).